Consider the following 265-residue polypeptide: 3-methyl-2-oxobutanoate hydroxymethyltransferase (265 aa).

The Mg(2+) site is built by Asp-44 and Asp-83. Residues Asp-44 to Ser-45, Asp-83, and Lys-113 each bind 3-methyl-2-oxobutanoate. Glu-115 contributes to the Mg(2+) binding site. Catalysis depends on Glu-183, which acts as the Proton acceptor.

This sequence belongs to the PanB family. Homodecamer; pentamer of dimers. Mg(2+) serves as cofactor.

It is found in the cytoplasm. It carries out the reaction 3-methyl-2-oxobutanoate + (6R)-5,10-methylene-5,6,7,8-tetrahydrofolate + H2O = 2-dehydropantoate + (6S)-5,6,7,8-tetrahydrofolate. The protein operates within cofactor biosynthesis; (R)-pantothenate biosynthesis; (R)-pantoate from 3-methyl-2-oxobutanoate: step 1/2. Catalyzes the reversible reaction in which hydroxymethyl group from 5,10-methylenetetrahydrofolate is transferred onto alpha-ketoisovalerate to form ketopantoate. This chain is 3-methyl-2-oxobutanoate hydroxymethyltransferase, found in Leptospira borgpetersenii serovar Hardjo-bovis (strain L550).